We begin with the raw amino-acid sequence, 227 residues long: Ion-translocating oxidoreductase complex subunit E (227 aa).

Helical transmembrane passes span 18–38 (ALVQ…VTNA), 39–59 (LGLG…VSLV), 69–89 (IPVF…LMNA), 93–113 (GLYL…IIIG), 125–145 (LPAV…LVLL), and 182–202 (HFLL…LIAL).

It belongs to the NqrDE/RnfAE family. In terms of assembly, the complex is composed of six subunits: RnfA, RnfB, RnfC, RnfD, RnfE and RnfG.

The protein resides in the cell inner membrane. Its function is as follows. Part of a membrane-bound complex that couples electron transfer with translocation of ions across the membrane. The sequence is that of Ion-translocating oxidoreductase complex subunit E from Aliivibrio fischeri (strain MJ11) (Vibrio fischeri).